The primary structure comprises 211 residues: tRNA (guanine-N(7)-)-methyltransferase (211 aa).

4 residues coordinate S-adenosyl-L-methionine: glutamate 44, aspartate 69, aspartate 96, and aspartate 118. Aspartate 118 is an active-site residue. Substrate is bound at residue lysine 122. An interaction with RNA region spans residues 124–129 (KHEKRR). Residues aspartate 154 and 191-194 (TEYE) each bind substrate.

The protein belongs to the class I-like SAM-binding methyltransferase superfamily. TrmB family.

It catalyses the reaction guanosine(46) in tRNA + S-adenosyl-L-methionine = N(7)-methylguanosine(46) in tRNA + S-adenosyl-L-homocysteine. The protein operates within tRNA modification; N(7)-methylguanine-tRNA biosynthesis. Its function is as follows. Catalyzes the formation of N(7)-methylguanine at position 46 (m7G46) in tRNA. This is tRNA (guanine-N(7)-)-methyltransferase from Streptococcus pyogenes serotype M18 (strain MGAS8232).